Reading from the N-terminus, the 96-residue chain is uncharacterized protein (96 aa).

An N-terminal signal peptide occupies residues 1-23 (MKQFYSVVLTIIIYISSQSNVVS). 3 cysteine pairs are disulfide-bonded: Cys60–Cys74, Cys67–Cys78, and Cys73–Cys83.

Its subcellular location is the secreted. This is an uncharacterized protein from Schistosoma japonicum (Blood fluke).